Consider the following 104-residue polypeptide: Large ribosomal subunit protein bL21 (104 aa).

Belongs to the bacterial ribosomal protein bL21 family. As to quaternary structure, part of the 50S ribosomal subunit. Contacts protein L20.

In terms of biological role, this protein binds to 23S rRNA in the presence of protein L20. The chain is Large ribosomal subunit protein bL21 from Clostridium botulinum (strain 657 / Type Ba4).